Reading from the N-terminus, the 110-residue chain is MPELKTVGLFLITALAEIAGCYLAYLWLREDKTIWLLVPCALSLVAFVWLLSLHPTAAGRVYAAYGGVYIVMAILWLWVVNGIRPTTWDLVGSAIALLGMAIIMFAPRTT.

4 helical membrane-spanning segments follow: residues 7–27 (VGLF…AYLW), 33–53 (TIWL…LLSL), 63–83 (AAYG…VNGI), and 87–107 (TWDL…MFAP).

This sequence belongs to the UPF0060 family.

It is found in the cell inner membrane. This is UPF0060 membrane protein Noc_2955 from Nitrosococcus oceani (strain ATCC 19707 / BCRC 17464 / JCM 30415 / NCIMB 11848 / C-107).